Consider the following 209-residue polypeptide: Protein lin-28 homolog A (209 aa).

The tract at residues 1–31 (MGSVSNQQFAGGCAKAAEEAPEEAPEDAARA) is disordered. Residue G2 is modified to N-acetylglycine. Phosphoserine is present on S3. Residues 39-112 (HGAGICKWFN…GLESIRVTGP (74 aa)) form the CSD domain. Residues 113–136 (GGVFCIGSERRPKGKSMQKRRSKG) form a flexible linker region. S120 carries the phosphoserine modification. 2 CCHC-type zinc fingers span residues 137 to 154 (DRCY…ECKL) and 159 to 176 (KKCH…SCPL). The tract at residues 178 to 209 (AQQGPSAQGKPTYFREEEEEIHSPTLLPEAQN) is disordered. S200 carries the post-translational modification Phosphoserine.

Belongs to the lin-28 family. As to quaternary structure, monomer. During skeletal muscle differentiation, associated with translation initiation complexes in the polysomal compartment. Directly interacts with EIF3S2. Interacts with NCL in an RNA-dependent manner. Interacts (via C-terminus) with DHX9 (via N- and C-terminus); this interaction occurs in a RNA-independent manner. Interacts with TUT4 in the presence of pre-let-7 RNA. Expressed in embryonic stem cells, placenta and testis. Tends to be up-regulated in HER2-overexpressing breast tumors.

It localises to the cytoplasm. Its subcellular location is the rough endoplasmic reticulum. The protein resides in the P-body. The protein localises to the stress granule. It is found in the nucleus. It localises to the nucleolus. Functionally, RNA-binding protein that inhibits processing of pre-let-7 miRNAs and regulates translation of mRNAs that control developmental timing, pluripotency and metabolism. Seems to recognize a common structural G-quartet (G4) feature in its miRNA and mRNA targets. 'Translational enhancer' that drives specific mRNAs to polysomes and increases the efficiency of protein synthesis. Its association with the translational machinery and target mRNAs results in an increased number of initiation events per molecule of mRNA and, indirectly, in mRNA stabilization. Binds IGF2 mRNA, MYOD1 mRNA, ARBP/36B4 ribosomal protein mRNA and its own mRNA. Essential for skeletal muscle differentiation program through the translational up-regulation of IGF2 expression. Suppressor of microRNA (miRNA) biogenesis, including that of let-7, miR107, miR-143 and miR-200c. Specifically binds the miRNA precursors (pre-miRNAs), recognizing an 5'-GGAG-3' motif found in pre-miRNA terminal loop, and recruits TUT4 and TUT7 uridylyltransferases. This results in the terminal uridylation of target pre-miRNAs. Uridylated pre-miRNAs fail to be processed by Dicer and undergo degradation. The repression of let-7 expression is required for normal development and contributes to maintain the pluripotent state by preventing let-7-mediated differentiation of embryonic stem cells. Localized to the periendoplasmic reticulum area, binds to a large number of spliced mRNAs and inhibits the translation of mRNAs destined for the ER, reducing the synthesis of transmembrane proteins, ER or Golgi lumen proteins, and secretory proteins. Binds to and enhances the translation of mRNAs for several metabolic enzymes, such as PFKP, PDHA1 or SDHA, increasing glycolysis and oxidative phosphorylation. Which, with the let-7 repression may enhance tissue repair in adult tissue. In Homo sapiens (Human), this protein is Protein lin-28 homolog A (LIN28A).